The sequence spans 2595 residues: Glucosylceramide transporter ABCA12 (2595 aa).

A helical transmembrane segment spans residues 23–43 (PLWTLVLILWPVIIFIILAIT). Basic and acidic residues predominate over residues 109–119 (LKKPSNPKRDS). The interval 109–143 (LKKPSNPKRDSNLSLRSTQVPERSHTSLATVPPRP) is disordered. Residues Asn120, Asn156, Asn174, Asn214, Asn275, Asn331, Asn365, Asn381, Asn410, Asn433, Asn455, Asn526, Asn541, Asn574, Asn605, Asn645, Asn749, Asn773, Asn812, Asn823, Asn854, Asn917, and Asn960 are each glycosylated (N-linked (GlcNAc...) asparagine). Residues 120–137 (NLSLRSTQVPERSHTSLA) show a composition bias toward polar residues. A run of 3 helical transmembrane segments spans residues 1062–1082 (VSYS…AAFV), 1109–1129 (FAWL…LIVI), and 1142–1162 (FILF…SYLI). N-linked (GlcNAc...) asparagine glycosylation is present at Asn1167. 3 consecutive transmembrane segments (helical) span residues 1171 to 1191 (IAAL…IVLV), 1197 to 1217 (LSYV…SYAS), and 1247 to 1267 (FGWL…IAWY). N-linked (GlcNAc...) asparagine glycosylation occurs at Asn1319. One can recognise an ABC transporter 1 domain in the interval 1346–1577 (VALHGVTKIY…FGDGYHLTLT (232 aa)). 1378-1385 (GPNGAGKT) provides a ligand contact to ATP. Asn1524, Asn1663, Asn1673, Asn1686, Asn1690, and Asn1704 each carry an N-linked (GlcNAc...) asparagine glycan. The tract at residues 1672–1703 (SNMSLEHLTQRKVGNPSANGTSTPDDLSVSSS) is disordered. A compositionally biased stretch (polar residues) spans 1687-1703 (PSANGTSTPDDLSVSSS). The helical transmembrane segment at 1747 to 1767 (LIAQVILPIVFVATAMGLGTL) threads the bilayer. Residues Asn1819, Asn1835, Asn1876, Asn1921, and Asn1952 are each glycosylated (N-linked (GlcNAc...) asparagine). 7 consecutive transmembrane segments (helical) span residues 1979–1999 (ATIS…GYSV), 2035–2055 (FIYD…VIAI), 2072–2092 (LLLL…AGLF), 2103–2123 (VCVN…VYFL), 2143–2163 (IFLI…SQQQ), 2187–2207 (GAMF…RLLI), and 2270–2290 (IIAV…GLLG). The ABC transporter 2 domain maps to 2254–2489 (VQLHRLTKTY…FGRGFTVKVH (236 aa)). 2290–2297 (GVNGAGKT) contacts ATP. N-linked (GlcNAc...) asparagine glycans are attached at residues Asn2318, Asn2542, and Asn2547. Residues 2575-2587 (VDTSSQGSTISVD) are compositionally biased toward polar residues. Residues 2575-2595 (VDTSSQGSTISVDSQEDQLDS) are disordered.

It belongs to the ABC transporter superfamily. ABCA family. As to quaternary structure, interacts with NR1H2 and ABCA1; this interaction is required for ABCA1 localization to the cell surface and is necessary for its normal activity and stability. Expressed in a number of other tissues besides skin, including heart, intestine, stomach, and kidney. Expressed mainly in the granular layer of the skin. Expressed in lung. Expressed in alpha and beta cells of pancreatic islets.

It is found in the cytoplasmic vesicle. The protein resides in the secretory vesicle membrane. Its subcellular location is the golgi apparatus membrane. It carries out the reaction ATP + H2O + phospholipidSide 1 = ADP + phosphate + phospholipidSide 2.. It catalyses the reaction a beta-D-glucosylceramide(in) + ATP + H2O = a beta-D-glucosylceramide(out) + ADP + phosphate + H(+). Transports lipids such as glucosylceramides from the outer to the inner leaflet of lamellar granules (LGs) membrane, whereby the lipids are finally transported to the keratinocyte periphery via the trans-Golgi network and LGs and released to the apical surface of the granular keratinocytes to form lipid lamellae in the stratum corneum of the epidermis, which is essential for skin barrier function. In the meantime, participates in the transport of the lamellar granules-associated proteolytic enzymes, in turn regulates desquamation and keratinocyte differentiation. Furthermore, is essential for the regulation of cellular cholesterol homeostasis by regulating ABCA1-dependent cholesterol efflux from macrophages through interaction with NR1H2 and ABCA1. Plays pleiotropic roles in regulating glucose stimulated insulin secretion from beta cells, regulating the morphology and fusion of insulin granules, lipid raft abundance and the actin cytoskeleton. Also involved in lung surfactant biogenesis. This Mus musculus (Mouse) protein is Glucosylceramide transporter ABCA12.